The sequence spans 473 residues: Cucurbitadienol 11-hydroxylase (473 aa).

Residues 4–24 form a helical membrane-spanning segment; sequence VVLGLATLFVAYYIHWINKWR. Cysteine 422 serves as a coordination point for heme.

It belongs to the cytochrome P450 family. Heme serves as cofactor. As to expression, highly expressed in young fruits 15 days after anthesis (15-DAA). Also observed in roots.

It localises to the membrane. The catalysed reaction is cucurbitadienol + 2 reduced [NADPH--hemoprotein reductase] + 2 O2 = 11-oxocucurbitadienol + 2 oxidized [NADPH--hemoprotein reductase] + 3 H2O + 2 H(+). It catalyses the reaction cucurbitadienol + reduced [NADPH--hemoprotein reductase] + O2 = 11-hydroxycucurbitadienol + oxidized [NADPH--hemoprotein reductase] + H2O + H(+). It carries out the reaction 11-hydroxycucurbitadienol + reduced [NADPH--hemoprotein reductase] + O2 = 11-oxocucurbitadienol + oxidized [NADPH--hemoprotein reductase] + 2 H2O + H(+). The enzyme catalyses (24R)-24,25-dihydroxycucurbitadienol + reduced [NADPH--hemoprotein reductase] + O2 = mogrol + oxidized [NADPH--hemoprotein reductase] + H2O + H(+). The protein operates within secondary metabolite biosynthesis; terpenoid biosynthesis. In terms of biological role, hydroxylase involved in the biosynthesis of cucurbitacin and mogroside tetracyclic triterpene natural products (e.g. siamenoside I and mogrosides IV, V and VI). Cucurbitacins have cytotoxic properties and exhibit deterrent taste as a defense barrier against herbivores. Mogrosides are nonsugar highly oxygenated compounds used as high-intensity zero-calorie sweeteners; they also possess pharmacological properties such as regulating immunity, lowering blood sugar and lipid levels, protecting the liver, and acting as antioxidants and antitumor agents. Catalyzes the oxidation of cucurbitadienol at the C-11 position to produce 11-oxocucurbitadienol, a possible biosynthetic intermediate from cucurbitadienol to mogrol. Also mediates the conversion of 24,25-dihydroxycucurbitadienol to mogrol. The polypeptide is Cucurbitadienol 11-hydroxylase (Siraitia grosvenorii (Monk's fruit)).